The sequence spans 283 residues: Elongation factor Ts (283 aa).

The segment at 80-83 is involved in Mg(2+) ion dislocation from EF-Tu; it reads TDFV.

This sequence belongs to the EF-Ts family.

It localises to the cytoplasm. Functionally, associates with the EF-Tu.GDP complex and induces the exchange of GDP to GTP. It remains bound to the aminoacyl-tRNA.EF-Tu.GTP complex up to the GTP hydrolysis stage on the ribosome. The chain is Elongation factor Ts from Histophilus somni (strain 129Pt) (Haemophilus somnus).